We begin with the raw amino-acid sequence, 1425 residues long: Protein NAP1 (1425 aa).

3 stretches are compositionally biased toward polar residues: residues 1 to 20 (MANS…PTSV), 1299 to 1312 (TPLS…SPSV), and 1320 to 1329 (SMKNSTTPQR). Disordered stretches follow at residues 1–24 (MANS…RSRE) and 1299–1425 (TPLS…KQHN). Positions 1362 to 1405 (SETGNSRNNENNNNNKQRGSSRRSGPLDYSSSHKGGSGSNSTGP) are enriched in low complexity.

This sequence belongs to the HEM-1/HEM-2 family. As to quaternary structure, binds PIR. As to expression, expressed in roots, root hairs, hypocotyls, cotyledons, stems, leaves, trichomes, and flowers.

Functionally, involved in regulation of actin and microtubule organization. Part of a WAVE complex that activates the Arp2/3 complex. This Arabidopsis thaliana (Mouse-ear cress) protein is Protein NAP1 (NAP1).